Consider the following 447-residue polypeptide: Gamma-glutamyl phosphate reductase (447 aa).

The protein belongs to the gamma-glutamyl phosphate reductase family.

It localises to the cytoplasm. The enzyme catalyses L-glutamate 5-semialdehyde + phosphate + NADP(+) = L-glutamyl 5-phosphate + NADPH + H(+). It participates in amino-acid biosynthesis; L-proline biosynthesis; L-glutamate 5-semialdehyde from L-glutamate: step 2/2. Its function is as follows. Catalyzes the NADPH-dependent reduction of L-glutamate 5-phosphate into L-glutamate 5-semialdehyde and phosphate. The product spontaneously undergoes cyclization to form 1-pyrroline-5-carboxylate. This Methanosarcina acetivorans (strain ATCC 35395 / DSM 2834 / JCM 12185 / C2A) protein is Gamma-glutamyl phosphate reductase.